The sequence spans 186 residues: ADP-ribosylation factor-like protein 8B (186 aa).

Residues 1-19 (MLALISRLLDWFRSLFWKE) constitute an intramembrane region (note=Mediates targeting to membranes). GTP contacts are provided by residues 29–35 (QYSGKTT), 71–75 (DIGGQ), and 130–133 (NKRD). A Glycyl lysine isopeptide (Lys-Gly) (interchain with G-Cter in ubiquitin) cross-link involves residue Lys-141.

It belongs to the small GTPase superfamily. Arf family. In terms of assembly, interacts with tubulin. Interacts with BORCS5; recruits ARL8B to lysosomes. Interacts with VPS41; the interaction mediates the recruitment of the HOPS complex to lysosomes. Interacts (GTP-bound form) with PLEKHM2 (via RUN domain); the interaction is required to recruit the motor protein kinesin-1 on lysosomes. Interacts (GTP-bound form) with PLEKHM1 (via RUN domain); the interaction is required for PLEKHM1 localization to lysosomes and for ARL8B function in delivery and degradation of endocytic and autophagic cargo in lysosomes. PLEKHM1 and PLEKHM2 compete for interaction with ARL8B. Interacts (GTP-bound form) with RUFY1; the interaction is required for RUFY1 endosomal location. When GTP-bound, interacts with RUFY3 and RUFY4, but not with RUFY1, nor RUFY2. In terms of processing, ubiquitinated at Lys-141 by RNF167, leading to its degradation.

It localises to the late endosome membrane. It is found in the lysosome membrane. Its subcellular location is the cytoplasm. The protein localises to the cytoskeleton. The protein resides in the spindle. It localises to the cell projection. It is found in the axon. Its subcellular location is the synapse. The protein localises to the cytolytic granule membrane. The protein resides in the early endosome membrane. It carries out the reaction GTP + H2O = GDP + phosphate + H(+). Its function is as follows. Small GTPase which cycles between active GTP-bound and inactive GDP-bound states. In its active state, binds to a variety of effector proteins playing a key role in the regulation of lysosomal positioning which is important for nutrient sensing, natural killer cell-mediated cytotoxicity and antigen presentation. Along with its effectors, orchestrates lysosomal transport and fusion. Localizes specifically to lysosomal membranes and mediates anterograde lysosomal motility by recruiting PLEKHM2, which in turn recruits the motor protein kinesin-1 on lysosomes. Required for lysosomal and cytolytic granule exocytosis. Critical factor involved in NK cell-mediated cytotoxicity. Drives the polarization of cytolytic granules and microtubule-organizing centers (MTOCs) toward the immune synapse between effector NK lymphocytes and target cells. In neurons, mediates the anterograde axonal long-range transport of presynaptic lysosome-related vesicles required for presynaptic biogenesis and synaptic function. Also acts as a regulator of endosome to lysosome trafficking pathways of special significance for host defense. Recruits RUFY1 onto early endosomes regulating endosomes to trans-Golgi network proteins retrieval. Regulates cargo trafficking to lysosomes by binding to PLEKHM1 and recruiting the HOPS subunit VPS41, resulting in functional assembly of the HOPS complex on lysosomal membranes. Plays an important role in cargo delivery to lysosomes for antigen presentation and microbial killing. Directs the intersection of CD1d with lipid antigens in lysosomes, and plays a role in intersecting phagosomes with lysosomes to generate phagolysosomes that kill microbes. Involved in the process of MHC II presentation. Regulates the delivery of antigens to lysosomes and the formation of MHC II-peptide complexes through the recruitment of the HOPS complex to lysosomes allowing the fusion of late endosomes to lysosomes. May play a role in chromosome segregation. The chain is ADP-ribosylation factor-like protein 8B (ARL8B) from Bos taurus (Bovine).